The following is a 492-amino-acid chain: Trk system potassium uptake protein TrkI (492 aa).

The next 10 helical transmembrane spans lie at 20 to 40, 47 to 67, 81 to 101, 143 to 163, 196 to 216, 246 to 266, 282 to 302, 334 to 354, 403 to 423, and 465 to 485; these read VLAV…LVLI, ALAF…SWIV, FVLT…PLVL, IMQW…LPFL, IYCG…MSPL, QLLW…VLYI, VQGL…WRVS, AWGA…GCSG, VVAF…GLSL, and WLLC…LVLL.

This sequence belongs to the TrkH potassium transport family.

The protein resides in the cell inner membrane. Its function is as follows. Medium-affinity potassium transport system. Probably interacts with Trk system potassium uptake protein TrkA. Main K(+) transporter in osmotically adapted cells. The polypeptide is Trk system potassium uptake protein TrkI (trkI) (Halomonas elongata (strain ATCC 33173 / DSM 2581 / NBRC 15536 / NCIMB 2198 / 1H9)).